Reading from the N-terminus, the 137-residue chain is Small ribosomal subunit protein uS19 (137 aa).

The segment at 115–137 (RNRVSHGSAGVGATRSSKFVPLK) is disordered.

Belongs to the universal ribosomal protein uS19 family.

Protein S19 forms a complex with S13 that binds strongly to the 16S ribosomal RNA. This Methanococcoides burtonii (strain DSM 6242 / NBRC 107633 / OCM 468 / ACE-M) protein is Small ribosomal subunit protein uS19.